Reading from the N-terminus, the 418-residue chain is 3-isopropylmalate dehydratase large subunit (418 aa).

3 residues coordinate [4Fe-4S] cluster: Cys299, Cys359, and Cys362.

It belongs to the aconitase/IPM isomerase family. LeuC type 2 subfamily. In terms of assembly, heterodimer of LeuC and LeuD. [4Fe-4S] cluster serves as cofactor.

The catalysed reaction is (2R,3S)-3-isopropylmalate = (2S)-2-isopropylmalate. It participates in amino-acid biosynthesis; L-leucine biosynthesis; L-leucine from 3-methyl-2-oxobutanoate: step 2/4. Catalyzes the isomerization between 2-isopropylmalate and 3-isopropylmalate, via the formation of 2-isopropylmaleate. This chain is 3-isopropylmalate dehydratase large subunit, found in Oleidesulfovibrio alaskensis (strain ATCC BAA-1058 / DSM 17464 / G20) (Desulfovibrio alaskensis).